Consider the following 169-residue polypeptide: Transcription antitermination protein NusB (169 aa).

This sequence belongs to the NusB family.

Functionally, involved in transcription antitermination. Required for transcription of ribosomal RNA (rRNA) genes. Binds specifically to the boxA antiterminator sequence of the ribosomal RNA (rrn) operons. This chain is Transcription antitermination protein NusB, found in Rhodococcus opacus (strain B4).